Consider the following 279-residue polypeptide: Large ribosomal subunit protein uL2 (279 aa).

Residues 223–279 (VAMNPIDHPHGGGEGRTSGGRHPVTPWGKGTKGTRTRSNKSTDKYILRSRHAKKKGR) are disordered. The segment covering 269 to 279 (LRSRHAKKKGR) has biased composition (basic residues).

It belongs to the universal ribosomal protein uL2 family. As to quaternary structure, part of the 50S ribosomal subunit. Forms a bridge to the 30S subunit in the 70S ribosome.

In terms of biological role, one of the primary rRNA binding proteins. Required for association of the 30S and 50S subunits to form the 70S ribosome, for tRNA binding and peptide bond formation. It has been suggested to have peptidyltransferase activity; this is somewhat controversial. Makes several contacts with the 16S rRNA in the 70S ribosome. In Paracoccus denitrificans (strain Pd 1222), this protein is Large ribosomal subunit protein uL2.